The chain runs to 359 residues: NADH-quinone oxidoreductase subunit H (359 aa).

The next 8 helical transmembrane spans lie at 19 to 39 (IGWF…FIAL), 94 to 114 (FLFV…FAVL), 127 to 147 (VGLF…LAAG), 175 to 195 (IALL…IILM), 202 to 222 (FLHW…IYFI), 255 to 275 (FAVI…IISI), 301 to 321 (VWGA…QMWL), and 337 to 357 (CWKV…IWVI).

It belongs to the complex I subunit 1 family. NDH-1 is composed of 14 different subunits. Subunits NuoA, H, J, K, L, M, N constitute the membrane sector of the complex.

The protein resides in the cell inner membrane. The catalysed reaction is a quinone + NADH + 5 H(+)(in) = a quinol + NAD(+) + 4 H(+)(out). NDH-1 shuttles electrons from NADH, via FMN and iron-sulfur (Fe-S) centers, to quinones in the respiratory chain. The immediate electron acceptor for the enzyme in this species is believed to be ubiquinone. Couples the redox reaction to proton translocation (for every two electrons transferred, four hydrogen ions are translocated across the cytoplasmic membrane), and thus conserves the redox energy in a proton gradient. This subunit may bind ubiquinone. The protein is NADH-quinone oxidoreductase subunit H of Chlorobaculum tepidum (strain ATCC 49652 / DSM 12025 / NBRC 103806 / TLS) (Chlorobium tepidum).